The following is a 352-amino-acid chain: N-acetyl-gamma-glutamyl-phosphate reductase (352 aa).

The active site involves Cys149.

This sequence belongs to the NAGSA dehydrogenase family. Type 1 subfamily.

It is found in the cytoplasm. The enzyme catalyses N-acetyl-L-glutamate 5-semialdehyde + phosphate + NADP(+) = N-acetyl-L-glutamyl 5-phosphate + NADPH + H(+). It participates in amino-acid biosynthesis; L-arginine biosynthesis; N(2)-acetyl-L-ornithine from L-glutamate: step 3/4. Catalyzes the NADPH-dependent reduction of N-acetyl-5-glutamyl phosphate to yield N-acetyl-L-glutamate 5-semialdehyde. The protein is N-acetyl-gamma-glutamyl-phosphate reductase of Polynucleobacter asymbioticus (strain DSM 18221 / CIP 109841 / QLW-P1DMWA-1) (Polynucleobacter necessarius subsp. asymbioticus).